A 440-amino-acid polypeptide reads, in one-letter code: Argininosuccinate lyase (440 aa).

The protein belongs to the lyase 1 family. Argininosuccinate lyase subfamily.

The protein resides in the cytoplasm. The catalysed reaction is 2-(N(omega)-L-arginino)succinate = fumarate + L-arginine. It participates in amino-acid biosynthesis; L-arginine biosynthesis; L-arginine from L-ornithine and carbamoyl phosphate: step 3/3. This chain is Argininosuccinate lyase, found in Clostridium botulinum (strain ATCC 19397 / Type A).